Consider the following 208-residue polypeptide: MTEEMQYEYLVPLEKYLSAGVRLGTRLSNKYLEDRGFIFAVRPDGLRIFDIKKIDERLKIAAKFIARYRPERVLVHTTRPYGFKPVQMFCKFVGCKALTGRFIPGTLTNPNLPHYQEVDLLFVVDPKLDAQAVAEAAKMGIPVIALVDTDTPHQYIDFMIPCNNKGRKSLALIFWILARQVLRERGELKPDQDLPVPPEEFETKLVQS.

A disordered region spans residues 189–208 (KPDQDLPVPPEEFETKLVQS).

It belongs to the universal ribosomal protein uS2 family.

This is Small ribosomal subunit protein uS2 (rps2) from Pyrobaculum aerophilum (strain ATCC 51768 / DSM 7523 / JCM 9630 / CIP 104966 / NBRC 100827 / IM2).